A 355-amino-acid polypeptide reads, in one-letter code: Uroporphyrinogen decarboxylase (355 aa).

Substrate is bound by residues 27 to 31, D77, Y154, T209, and H328; that span reads RQAGR.

The protein belongs to the uroporphyrinogen decarboxylase family. Homodimer.

It localises to the cytoplasm. It carries out the reaction uroporphyrinogen III + 4 H(+) = coproporphyrinogen III + 4 CO2. The protein operates within porphyrin-containing compound metabolism; protoporphyrin-IX biosynthesis; coproporphyrinogen-III from 5-aminolevulinate: step 4/4. Catalyzes the decarboxylation of four acetate groups of uroporphyrinogen-III to yield coproporphyrinogen-III. This is Uroporphyrinogen decarboxylase from Photobacterium profundum (strain SS9).